Reading from the N-terminus, the 323-residue chain is D-alanine--D-alanine ligase (323 aa).

An ATP-grasp domain is found at K102–Q300. V130–T185 contributes to the ATP binding site. Residues D254, E267, and N269 each coordinate Mg(2+).

It belongs to the D-alanine--D-alanine ligase family. Requires Mg(2+) as cofactor. It depends on Mn(2+) as a cofactor.

Its subcellular location is the cytoplasm. The enzyme catalyses 2 D-alanine + ATP = D-alanyl-D-alanine + ADP + phosphate + H(+). Its pathway is cell wall biogenesis; peptidoglycan biosynthesis. Cell wall formation. The protein is D-alanine--D-alanine ligase of Synechococcus sp. (strain JA-3-3Ab) (Cyanobacteria bacterium Yellowstone A-Prime).